The primary structure comprises 130 residues: Small ribosomal subunit protein uS9 (130 aa).

This sequence belongs to the universal ribosomal protein uS9 family.

The chain is Small ribosomal subunit protein uS9 from Aliivibrio salmonicida (strain LFI1238) (Vibrio salmonicida (strain LFI1238)).